We begin with the raw amino-acid sequence, 203 residues long: Inosine triphosphate pyrophosphatase (203 aa).

13-18 is an ITP binding site; that stretch reads TGNAKK. Glu43 lines the Mg(2+) pocket. ITP-binding positions include Lys55, 71–72, Lys88, 147–150, Lys170, and 175–176; these read DT, FGWD, and HR.

This sequence belongs to the HAM1 NTPase family. In terms of assembly, homodimer. Mg(2+) serves as cofactor. It depends on Mn(2+) as a cofactor.

It localises to the cytoplasm. It catalyses the reaction ITP + H2O = IMP + diphosphate + H(+). The enzyme catalyses dITP + H2O = dIMP + diphosphate + H(+). The catalysed reaction is XTP + H2O = XMP + diphosphate + H(+). It carries out the reaction N(6)-hydroxy-dATP + H2O = N(6)-hydroxy-dAMP + diphosphate + H(+). Pyrophosphatase that hydrolyzes the non-canonical purine nucleotides inosine triphosphate (ITP), deoxyinosine triphosphate (dITP) as well as 2'-deoxy-N-6-hydroxylaminopurine triphosphate (dHAPTP) and xanthosine 5'-triphosphate (XTP) to their respective monophosphate derivatives. The enzyme does not distinguish between the deoxy- and ribose forms. Probably excludes non-canonical purines from RNA and DNA precursor pools, thus preventing their incorporation into RNA and DNA and avoiding chromosomal lesions. The sequence is that of Inosine triphosphate pyrophosphatase (itpa) from Danio rerio (Zebrafish).